Here is a 270-residue protein sequence, read N- to C-terminus: tRNA (guanine-N(1)-)-methyltransferase (270 aa).

S-adenosyl-L-methionine-binding positions include G119 and 139 to 144 (IGDYVI).

This sequence belongs to the RNA methyltransferase TrmD family. As to quaternary structure, homodimer.

The protein localises to the cytoplasm. It carries out the reaction guanosine(37) in tRNA + S-adenosyl-L-methionine = N(1)-methylguanosine(37) in tRNA + S-adenosyl-L-homocysteine + H(+). In terms of biological role, specifically methylates guanosine-37 in various tRNAs. This is tRNA (guanine-N(1)-)-methyltransferase from Nitrosomonas europaea (strain ATCC 19718 / CIP 103999 / KCTC 2705 / NBRC 14298).